We begin with the raw amino-acid sequence, 171 residues long: Co-chaperone protein HscB (171 aa).

The 73-residue stretch at 2–74 (DYFTLFGLPA…LMRAEYLLSL (73 aa)) folds into the J domain.

The protein belongs to the HscB family. As to quaternary structure, interacts with HscA and stimulates its ATPase activity. Interacts with IscU.

Co-chaperone involved in the maturation of iron-sulfur cluster-containing proteins. Seems to help targeting proteins to be folded toward HscA. In Shigella flexneri serotype 5b (strain 8401), this protein is Co-chaperone protein HscB.